The sequence spans 295 residues: Inward rectifier potassium channel Kirbac3.1 (295 aa).

At 1–47 the chain is on the cytoplasmic side; it reads MTGGMKPPARKPRILNSDGSSNITRLGLEKRGWLDDHYHDLLTVSWP. The helical transmembrane segment at 48–69 threads the bilayer; that stretch reads VFITLITGLYLVTNALFALAYL. Residues 70–82 lie on the Extracellular side of the membrane; that stretch reads ACGDVIENARPGS. The helical; Pore-forming intramembrane region spans 83–95; sequence FTDAFFFSVQTMA. Positions 96–100 match the Selectivity filter motif; the sequence is TIGYG. Residues 107–131 traverse the membrane as a helical segment; that stretch reads PLANTLVTLEALCGMLGLAVAASLI. The Cytoplasmic segment spans residues 132–295; the sequence is YARFTRPTAG…DLGKFHEIAQ (164 aa).

The protein belongs to the inward rectifier-type potassium channel (TC 1.A.2.1) family. KCNJ11 subfamily. In terms of assembly, homotetramer.

The protein resides in the membrane. Its function is as follows. Inward rectifier potassium channel that mediates potassium uptake into the cell. Inward rectifier potassium channels are characterized by a greater tendency to allow potassium to flow into the cell rather than out of it. The inward rectification may be achieved by the blockage of outward current by cytoplasmic divalent metal ions and polyamines. Complements an E.coli mutant that is defective in K(+) uptake. This chain is Inward rectifier potassium channel Kirbac3.1, found in Paramagnetospirillum magnetotacticum (Aquaspirillum magnetotacticum).